The sequence spans 344 residues: Trace amine-associated receptor 8b (344 aa).

The Extracellular segment spans residues 1–31 (MTSNFSQPALQLCYENTNGSCIKTPYSPGPR). Residues asparagine 4 and asparagine 18 are each glycosylated (N-linked (GlcNAc...) asparagine). 2 disulfides stabilise this stretch: cysteine 21–cysteine 185 and cysteine 104–cysteine 189. A helical membrane pass occupies residues 32 to 52 (VILYMVFGFGAVLAVCGNLLV). The Cytoplasmic portion of the chain corresponds to 53–67 (VISVLHFKQLHSPAN). A helical membrane pass occupies residues 68–88 (FLIASLASADFLVGISVMPFS). Topologically, residues 89–111 (MVRSIESCWYFGDAFCSLHSCCD) are extracellular. Residues 112 to 132 (VAFCYSSALHLCFISVDRYIA) form a helical membrane-spanning segment. The Cytoplasmic segment spans residues 133–146 (VTDPLVYPTKFTVS). A helical membrane pass occupies residues 147 to 167 (VSGICISISWILPLVYSSAVF). The Extracellular portion of the chain corresponds to 168-195 (YTGISAKGIESLVSALNCVGGCQIVVNQ). Residues 196-216 (DWVLIDFLLFFIPTLVMIILY) form a helical membrane-spanning segment. Over 217–260 (SKIFLVAKQQAVKIETSVSDNRGESSSESHKARVAKRERKAAKT) the chain is Cytoplasmic. Residues 261–281 (LGVTVVAFMVSWLPYTIDSLV) form a helical membrane-spanning segment. Residue aspartate 282 is a topological domain, extracellular. Residues 283-303 (AFVGFITPAYVYEICCWSAYY) traverse the membrane as a helical segment. Residues 304 to 344 (NSAMNPLIYAFFYPWFRKAIKLILSGEILKSHSSTMSLFSE) lie on the Cytoplasmic side of the membrane.

The protein belongs to the G-protein coupled receptor 1 family. As to expression, specifically expressed in neurons of the olfactory epithelium.

The protein resides in the cell membrane. In terms of biological role, olfactory receptor specific for trace amines. Trace amine compounds are enriched in animal body fluids and act on trace amine-associated receptors (TAARs) to elicit both intraspecific and interspecific innate behaviors. Ligand-binding causes a conformation change that triggers signaling via G alpha proteins, possibly G(i)/G(o) G alpha proteins. The sequence is that of Trace amine-associated receptor 8b from Mus musculus (Mouse).